The following is a 376-amino-acid chain: Chaperone protein DnaJ (376 aa).

A J domain is found at 5-70 (DYYEVLGVGR…DKKAAYDQFG (66 aa)). The CR-type zinc finger occupies 132-210 (GLTKELKVPT…CHGNGRVEKT (79 aa)). Zn(2+) contacts are provided by C145, C148, C162, C165, C184, C187, C198, and C201. 4 CXXCXGXG motif repeats span residues 145 to 152 (CDSCDGSG), 162 to 169 (CGTCHGMG), 184 to 191 (CPTCHGRG), and 198 to 205 (CSKCHGNG).

It belongs to the DnaJ family. In terms of assembly, homodimer. The cofactor is Zn(2+).

It is found in the cytoplasm. Participates actively in the response to hyperosmotic and heat shock by preventing the aggregation of stress-denatured proteins and by disaggregating proteins, also in an autonomous, DnaK-independent fashion. Unfolded proteins bind initially to DnaJ; upon interaction with the DnaJ-bound protein, DnaK hydrolyzes its bound ATP, resulting in the formation of a stable complex. GrpE releases ADP from DnaK; ATP binding to DnaK triggers the release of the substrate protein, thus completing the reaction cycle. Several rounds of ATP-dependent interactions between DnaJ, DnaK and GrpE are required for fully efficient folding. Also involved, together with DnaK and GrpE, in the DNA replication of plasmids through activation of initiation proteins. This chain is Chaperone protein DnaJ, found in Shewanella amazonensis (strain ATCC BAA-1098 / SB2B).